A 99-amino-acid polypeptide reads, in one-letter code: Small integral membrane protein 14 (99 aa).

The Lumenal segment spans residues 1 to 49 (MAEGGFDPCECICSHEHAMRRLINLLRQSQSYCTDTECLRELPGPSGDS). The helical transmembrane segment at 50-70 (GISITVILMAWMVIAVLLFLL) threads the bilayer. Topologically, residues 71-99 (RPPNLRGSSLPGKPSSPHSGQDPPAPPVD) are cytoplasmic. Residues 77-99 (GSSLPGKPSSPHSGQDPPAPPVD) are disordered.

It is found in the endoplasmic reticulum membrane. This Rattus norvegicus (Rat) protein is Small integral membrane protein 14 (Smim14).